Here is a 120-residue protein sequence, read N- to C-terminus: Small ribosomal subunit protein eS24 (120 aa).

Positions 101–120 (RDAGTKQKKGGSKGGQGAKG) are disordered.

The protein belongs to the eukaryotic ribosomal protein eS24 family.

The sequence is that of Small ribosomal subunit protein eS24 from Saccharolobus islandicus (strain M.16.27) (Sulfolobus islandicus).